Here is a 977-residue protein sequence, read N- to C-terminus: Zinc finger CCCH domain-containing protein 7B (977 aa).

TPR repeat units follow at residues 1–27 (MERQ…KQEE), 36–69 (VQNL…ADYA), and 82–115 (CKLH…DSES). Phosphoserine is present on Ser-217. The LD motif; interaction with NSP3 signature appears at 248 to 256 (STDSLDDFS). A phosphoserine mark is found at Ser-364 and Ser-367. The disordered stretch occupies residues 365–403 (FGSTRGSLDKPDSFMEETNSQDHRPPSGAQKPAPSPEPC). 3 C3H1-type zinc fingers span residues 484–508 (LCKD…HQEE), 616–638 (VCRH…HSFI), and 754–782 (PQQY…HSPE). Residues 842 to 866 (YHCWLCGKNSNSKKQWQQHIQSEKH) form a C2H2-type zinc finger. Residues 886 to 914 (MGEFRLCDRLQKGKACPDGDKCRCAHGQE) form a C3H1-type 4 zinc finger.

(Microbial infection) Interacts (via LD motif) with rotavirus A NSP3 (via the coiled-coil region).

The protein resides in the nucleus. Its function is as follows. May be a specific regulator of miRNA biogenesis. Binds to microRNAs MIR7-1, MIR16-2 and MIR29A hairpins recognizing the 'ATA(A/T)' motif in the apical loop. This is Zinc finger CCCH domain-containing protein 7B (ZC3H7B) from Homo sapiens (Human).